The sequence spans 232 residues: UPF0502 protein mma_2112 (232 aa).

It belongs to the UPF0502 family.

This chain is UPF0502 protein mma_2112, found in Janthinobacterium sp. (strain Marseille) (Minibacterium massiliensis).